We begin with the raw amino-acid sequence, 166 residues long: Interferon gamma (166 aa).

An N-terminal signal peptide occupies residues 1-23 (MKYTSSFLALLLCVLLGFSGSYG). Q24 is modified (pyrrolidone carboxylic acid). N-linked (GlcNAc...) asparagine glycans are attached at residues N39 and N106.

It belongs to the type II (or gamma) interferon family. As to quaternary structure, homodimer. Interacts with IFNGR1 (via extracellular domain); this interaction promotes IFNGR1 dimerization. Released primarily from activated T lymphocytes.

The protein localises to the secreted. Its function is as follows. Type II interferon produced by immune cells such as T-cells and NK cells that plays crucial roles in antimicrobial, antiviral, and antitumor responses by activating effector immune cells and enhancing antigen presentation. Primarily signals through the JAK-STAT pathway after interaction with its receptor IFNGR1 to affect gene regulation. Upon IFNG binding, IFNGR1 intracellular domain opens out to allow association of downstream signaling components JAK2, JAK1 and STAT1, leading to STAT1 activation, nuclear translocation and transcription of IFNG-regulated genes. Many of the induced genes are transcription factors such as IRF1 that are able to further drive regulation of a next wave of transcription. Plays a role in class I antigen presentation pathway by inducing a replacement of catalytic proteasome subunits with immunoproteasome subunits. In turn, increases the quantity, quality, and repertoire of peptides for class I MHC loading. Increases the efficiency of peptide generation also by inducing the expression of activator PA28 that associates with the proteasome and alters its proteolytic cleavage preference. Up-regulates as well MHC II complexes on the cell surface by promoting expression of several key molecules such as cathepsins B/CTSB, H/CTSH, and L/CTSL. Participates in the regulation of hematopoietic stem cells during development and under homeostatic conditions by affecting their development, quiescence, and differentiation. This chain is Interferon gamma (IFNG), found in Ovis aries (Sheep).